The primary structure comprises 79 residues: uncharacterized protein (79 aa).

This is an uncharacterized protein from Acidianus two-tailed virus (ATV).